The sequence spans 775 residues: Chitin synthase 6 (775 aa).

6 consecutive transmembrane segments (helical) span residues 19–39, 54–74, 94–114, 441–461, 470–490, and 498–518; these read VLLM…YCLV, CIIV…IMVV, LQWF…LFCI, FMQN…LAIM, LPVG…LYFG, and IWLY…YMVY. Residues 532 to 541 show a composition bias toward low complexity; the sequence is RADAAAADSH. 2 disordered regions span residues 532-603 and 702-775; these read RADA…DGKF and PSAF…KTSR. Residues 542–556 are compositionally biased toward basic and acidic residues; sequence TTAREAAEQAEKQGD. Positions 577-586 are enriched in polar residues; sequence NRESTTTSEL. Positions 702 to 713 are enriched in low complexity; sequence PSAFPHAHSASA. Residue asparagine 724 is glycosylated (N-linked (GlcNAc...) asparagine). Residues 732 to 741 are compositionally biased toward basic and acidic residues; that stretch reads RSEDIQRFSE. Polar residues predominate over residues 754–763; sequence SRNVGNSSFA. Asparagine 759 carries an N-linked (GlcNAc...) asparagine glycan. Residues 766–775 show a composition bias toward basic residues; it reads MAKRTPKTSR.

This sequence belongs to the chitin synthase family. Class VII subfamily.

The protein localises to the cell membrane. The catalysed reaction is [(1-&gt;4)-N-acetyl-beta-D-glucosaminyl](n) + UDP-N-acetyl-alpha-D-glucosamine = [(1-&gt;4)-N-acetyl-beta-D-glucosaminyl](n+1) + UDP + H(+). Its function is as follows. Polymerizes chitin, a structural polymer of the cell wall and septum, by transferring the sugar moiety of UDP-GlcNAc to the non-reducing end of the growing chitin polymer. Shows additive effects in septum formation with CHS1, CHS2, CHS3A, CHS4, CHS5 and CHS7. Involved in virulence and mediates mycotoxin deoxinivalenol (DON) biosynthesis via the regulation of the expression of TRI4, TRI5 and TRI6. This chain is Chitin synthase 6, found in Gibberella zeae (strain ATCC MYA-4620 / CBS 123657 / FGSC 9075 / NRRL 31084 / PH-1) (Wheat head blight fungus).